A 329-amino-acid polypeptide reads, in one-letter code: BTB/POZ domain-containing adapter for CUL3-mediated RhoA degradation protein 1 (329 aa).

The segment covering 1-15 (MSAEASGPAAAEAPS) has biased composition (low complexity). A disordered region spans residues 1–21 (MSAEASGPAAAEAPSLEVAKP). A BTB domain is found at 41–109 (KYVKLNVGGS…LRDGSVPLPE (69 aa)). The interval 280–302 (LEATGGAAGGGGASRGEDEDNRE) is disordered.

It belongs to the BACURD family. As to quaternary structure, homotetramer; forms a two-fold symmetric tetramer in solution. Interacts with CUL3; interaction is direct and forms a 5:5 heterodecamer. Component of the BCR(KCTD13) E3 ubiquitin ligase complex, at least composed of CUL3, KCTD13/BACURD1 and RBX1. Interacts with RHOA; with a preference for RhoA-GDP. Interacts with POLD2 and PCNA. Interacts with SPRTN.

The protein localises to the nucleus. Its pathway is protein modification; protein ubiquitination. Substrate-specific adapter of a BCR (BTB-CUL3-RBX1) E3 ubiquitin-protein ligase complex required for synaptic transmission. The BCR(KCTD13) E3 ubiquitin ligase complex mediates the ubiquitination of RHOA, leading to its degradation by the proteasome, thereby regulating the actin cytoskeleton and promoting synaptic transmission. The protein is BTB/POZ domain-containing adapter for CUL3-mediated RhoA degradation protein 1 (KCTD13) of Bos taurus (Bovine).